The following is a 368-amino-acid chain: C-X-C chemokine receptor type 3 (368 aa).

At 1–53 (MVLEVSDHQVLNDAEVAALLENFSSSYDYGENESDSCCTSPPCPQDFSLNFDR) the chain is on the extracellular side. An N-linked (GlcNAc...) asparagine glycan is attached at asparagine 22. Sulfotyrosine is present on residues tyrosine 27 and tyrosine 29. An N-linked (GlcNAc...) asparagine glycan is attached at asparagine 32. The chain crosses the membrane as a helical span at residues 54 to 80 (AFLPALYSLLFLLGLLGNGAVAAVLLS). The Cytoplasmic portion of the chain corresponds to 81-89 (RRTALSSTD). A helical membrane pass occupies residues 90 to 110 (TFLLHLAVADTLLVLTLPLWA). The Extracellular portion of the chain corresponds to 111–125 (VDAAVQWVFGSGLCK). Cysteine 124 and cysteine 203 are disulfide-bonded. The helical transmembrane segment at 126–147 (VAGALFNINFYAGALLLACISF) threads the bilayer. Residues 148–169 (DRYLNIVHATQLYRRGPPARVT) are Cytoplasmic-facing. Residues 170–189 (LTCLAVWGLCLLFALPDFIF) traverse the membrane as a helical segment. Over 190–212 (LSAHHDERLNATHCQYNFPQVGR) the chain is Extracellular. A helical transmembrane segment spans residues 213 to 233 (TALRVLQLVAGFLLPLLVMAY). The Cytoplasmic segment spans residues 234 to 255 (CYAHILAVLLVSRGQRRLRAMR). Residues 256 to 277 (LVVVVVVAFALCWTPYHLVVLV) form a helical membrane-spanning segment. Residues 278–298 (DILMDLGALARNCGRESRVDV) are Extracellular-facing. The helical transmembrane segment at 299–321 (AKSVTSGLGYMHCCLNPLLYAFV) threads the bilayer. Topologically, residues 322-368 (GVKFRERMWMLLLRLGCPNQRGLQRQPSSSRRDSSWSETSEASYSGL) are cytoplasmic. Residues 342 to 368 (RGLQRQPSSSRRDSSWSETSEASYSGL) form a disordered region. Positions 357–368 (WSETSEASYSGL) are enriched in low complexity.

Belongs to the G-protein coupled receptor 1 family. As to quaternary structure, homomer. Forms heteromers with ACKR4. In terms of assembly, interacts with PF4/CXCL4. Sulfation on Tyr-27 and Tyr-29 is essential for CXCL10 binding and subsequent signal transduction induction. Post-translationally, N-glycosylated. Isoform 1 and isoform 2 are mainly expressed in heart, kidney, liver and skeletal muscle. Isoform 1 is also expressed in placenta. Isoform 2 is expressed in endothelial cells. Expressed in T-cells (at protein level).

The protein localises to the cell membrane. Functionally, receptor for the C-X-C chemokine CXCL9, CXCL10 and CXCL11 and mediates the proliferation, survival and angiogenic activity of human mesangial cells (HMC) through a heterotrimeric G-protein signaling pathway. Binds to CCL21. Probably promotes cell chemotaxis response. Upon activation by PF4, induces activated T-lymphocytes migration mediated via downstream Ras/extracellular signal-regulated kinase (ERK) signaling. In terms of biological role, receptor for the C-X-C chemokine CXCL4 and also mediates the inhibitory activities of CXCL9, CXCL10 and CXCL11 on the proliferation, survival and angiogenic activity of human microvascular endothelial cells (HMVEC) through a cAMP-mediated signaling pathway. Does not promote cell chemotaxis respons. Interaction with CXCL4 or CXCL10 leads to activation of the p38MAPK pathway and contributes to inhibition of angiogenesis. Overexpression in renal cancer cells down-regulates expression of the anti-apoptotic protein HMOX1 and promotes apoptosis. Mediates the activity of CXCL11. This is C-X-C chemokine receptor type 3 (CXCR3) from Homo sapiens (Human).